Consider the following 343-residue polypeptide: Homeobox-leucine zipper protein HOX16 (343 aa).

A DNA-binding region (homeobox) is located at residues 74-133 (LPEKKRRLTPEQVHLLERSFEEENKLEPERKTELARKLGLQPRQVAVWFQNRRARWKTKQ). Residues 132–176 (KQLERDFDRLKASFDALRADHDALLQDNHRLHSQVMSLTEKLQEK) form a leucine-zipper region. A disordered region spans residues 218–239 (FEEQQEQQVKAEDRLSTGSGGS).

This sequence belongs to the HD-ZIP homeobox family. Class I subfamily. Expressed in seedlings, stems, leaf sheaths and blades and panicles.

It localises to the nucleus. Its function is as follows. Probable transcription factor. This chain is Homeobox-leucine zipper protein HOX16 (HOX16), found in Oryza sativa subsp. japonica (Rice).